Reading from the N-terminus, the 444-residue chain is Phosphoglucosamine mutase (444 aa).

Serine 104 (phosphoserine intermediate) is an active-site residue. The Mg(2+) site is built by serine 104, aspartate 243, aspartate 245, and aspartate 247. A Phosphoserine modification is found at serine 104.

The protein belongs to the phosphohexose mutase family. Mg(2+) is required as a cofactor. In terms of processing, activated by phosphorylation.

It carries out the reaction alpha-D-glucosamine 1-phosphate = D-glucosamine 6-phosphate. In terms of biological role, catalyzes the conversion of glucosamine-6-phosphate to glucosamine-1-phosphate. In Neisseria meningitidis serogroup B (strain ATCC BAA-335 / MC58), this protein is Phosphoglucosamine mutase.